Here is a 334-residue protein sequence, read N- to C-terminus: Ketol-acid reductoisomerase (NADP(+)) (334 aa).

The KARI N-terminal Rossmann domain maps to 2 to 182 (PKMYYEKDTD…GGARAGVLET (181 aa)). NADP(+) is bound by residues 25–28 (YGSQ), S51, S53, and 83–86 (DEKQ). Residue H108 is part of the active site. G134 contacts NADP(+). The region spanning 183 to 328 (TFKDETETDL…KELRGMMSWI (146 aa)) is the KARI C-terminal knotted domain. 4 residues coordinate Mg(2+): D191, E195, E227, and E231. S252 provides a ligand contact to substrate.

It belongs to the ketol-acid reductoisomerase family. Mg(2+) is required as a cofactor.

The enzyme catalyses (2R)-2,3-dihydroxy-3-methylbutanoate + NADP(+) = (2S)-2-acetolactate + NADPH + H(+). It catalyses the reaction (2R,3R)-2,3-dihydroxy-3-methylpentanoate + NADP(+) = (S)-2-ethyl-2-hydroxy-3-oxobutanoate + NADPH + H(+). Its pathway is amino-acid biosynthesis; L-isoleucine biosynthesis; L-isoleucine from 2-oxobutanoate: step 2/4. It participates in amino-acid biosynthesis; L-valine biosynthesis; L-valine from pyruvate: step 2/4. Functionally, involved in the biosynthesis of branched-chain amino acids (BCAA). Catalyzes an alkyl-migration followed by a ketol-acid reduction of (S)-2-acetolactate (S2AL) to yield (R)-2,3-dihydroxy-isovalerate. In the isomerase reaction, S2AL is rearranged via a Mg-dependent methyl migration to produce 3-hydroxy-3-methyl-2-ketobutyrate (HMKB). In the reductase reaction, this 2-ketoacid undergoes a metal-dependent reduction by NADPH to yield (R)-2,3-dihydroxy-isovalerate. The sequence is that of Ketol-acid reductoisomerase (NADP(+)) from Clostridium beijerinckii (strain ATCC 51743 / NCIMB 8052) (Clostridium acetobutylicum).